The chain runs to 175 residues: Enhancer of mRNA-decapping protein 1 (175 aa).

Over residues 1–27 (MSTDTMYFNSSRLLPSAGRNKTNNLIK) the composition is skewed to polar residues. Disordered regions lie at residues 1-113 (MSTD…KDDT) and 155-175 (GSTFATNGPREAKNLPKPSFL). An N-acetylserine modification is found at serine 2. Residues 35 to 47 (ARGNAAKNANNNN) are compositionally biased toward low complexity. A compositionally biased stretch (polar residues) spans 58 to 77 (LPNGQKPNFGHSSNKKPSFN). At serine 82 the chain carries Phosphoserine. Residues 100–113 (NNKETPRQNNKDDT) show a composition bias toward basic and acidic residues.

Belongs to the EDC family.

The protein resides in the cytoplasm. Its function is as follows. mRNA-binding protein which stimulates mRNA decapping by DCP1 and DCP2. Involved in the regulation of expression of multiple genes involved in glycolysis and gluconeogenesis. The sequence is that of Enhancer of mRNA-decapping protein 1 (EDC1) from Saccharomyces cerevisiae (strain ATCC 204508 / S288c) (Baker's yeast).